Reading from the N-terminus, the 154-residue chain is Transcriptional repressor NrdR (154 aa).

A zinc finger lies at 3 to 34; sequence CPYCRHPDSRVVDSREADDGQLIRRRRSCPEC. One can recognise an ATP-cone domain in the interval 46–136; sequence LAVVKRSGVT…VYRSFESLAD (91 aa).

Belongs to the NrdR family. It depends on Zn(2+) as a cofactor.

Functionally, negatively regulates transcription of bacterial ribonucleotide reductase nrd genes and operons by binding to NrdR-boxes. The sequence is that of Transcriptional repressor NrdR from Salinispora tropica (strain ATCC BAA-916 / DSM 44818 / JCM 13857 / NBRC 105044 / CNB-440).